The following is a 100-amino-acid chain: Small ribosomal subunit protein uS17 (100 aa).

Belongs to the universal ribosomal protein uS17 family. In terms of assembly, part of the 30S ribosomal subunit.

Functionally, one of the primary rRNA binding proteins, it binds specifically to the 5'-end of 16S ribosomal RNA. The sequence is that of Small ribosomal subunit protein uS17 from Erythrobacter litoralis (strain HTCC2594).